We begin with the raw amino-acid sequence, 770 residues long: Protein PAT1 homolog 1 (770 aa).

The interval 1–26 (MFRYESLEDCPLDEDEDAFQGLGEED) is disordered. The interval 1–84 (MFRYESLEDC…EMDLLGDHEE (84 aa)) is region A; interaction with DDX6/RCK. The interval 1–397 (MFRYESLEDC…HRSSHQDHLR (397 aa)) is involved in nuclear foci localization. The span at 7–26 (LEDCPLDEDEDAFQGLGEED) shows a compositional bias: acidic residues. Residues 85–388 (NLAERLSKMV…LNGAGDRGSH (304 aa)) are region N; interaction with decapping machinery. A Nuclear export signal motif is present at residues 86–95 (LAERLSKMVI). Position 177 is a phosphoserine (S177). The residue at position 178 (T178) is a Phosphothreonine. Residues S179 and S184 each carry the phosphoserine modification. T194 is subject to Phosphothreonine. R217, R223, and R263 each carry asymmetric dimethylarginine. Residues 223–397 (RYPAPYGERM…HRSSHQDHLR (175 aa)) are involved in RNA-binding. S278 carries the phosphoserine modification. R284 is modified (asymmetric dimethylarginine). Disordered regions lie at residues 315–344 (FRAF…QNLR) and 360–400 (QHRR…RKDP). The span at 324–337 (SATPPPQQHPPGPG) shows a compositional bias: pro residues. Low complexity predominate over residues 367–380 (QRQQQNRNQHRNLN). R385 is modified (omega-N-methylarginine). Residues 385–400 (RGSHRSSHQDHLRKDP) are compositionally biased toward basic and acidic residues. Residues 389 to 448 (RSSHQDHLRKDPYANLMLQREKDWVSKIQMMQLQSTDPYLDDFYYQNYFEKLEKLSAAEE) are region H. Positions 398–770 (KDPYANLMLQ…TKLQLVQGIR (373 aa)) are involved in nuclear speckle localization. Residues 449 to 770 (IQGDGPKKER…TKLQLVQGIR (322 aa)) form a region C region.

This sequence belongs to the PAT1 family. As to quaternary structure, interacts (via region A) with DDX6/RCK. Interacts (via region H and region C) with LSM1 and LSM4. Interacts (via region N) with DCP1A, DCP2, EDC3, EDC4 and XRN1. Interacts with the CCR4-NOT complex. Interacts with the Lsm-containing SMN-Sm protein complex. Interacts with EIF4ENIF1/4E-T.

It is found in the cytoplasm. The protein resides in the P-body. The protein localises to the nucleus. It localises to the PML body. Its subcellular location is the nucleus speckle. Functionally, RNA-binding protein involved in deadenylation-dependent decapping of mRNAs, leading to the degradation of mRNAs. Acts as a scaffold protein that connects deadenylation and decapping machinery. Required for cytoplasmic mRNA processing body (P-body) assembly. This chain is Protein PAT1 homolog 1 (PATL1), found in Pongo abelii (Sumatran orangutan).